A 200-amino-acid chain; its full sequence is GTP cyclohydrolase-2 (200 aa).

50–54 (RVHSE) is a GTP binding site. Positions 55, 66, and 68 each coordinate Zn(2+). GTP-binding positions include glutamine 71, 93–95 (EGR), and threonine 115. The active-site Proton acceptor is the aspartate 127. The Nucleophile role is filled by arginine 129. Residues threonine 150 and lysine 155 each contribute to the GTP site.

This sequence belongs to the GTP cyclohydrolase II family. The cofactor is Zn(2+).

The catalysed reaction is GTP + 4 H2O = 2,5-diamino-6-hydroxy-4-(5-phosphoribosylamino)-pyrimidine + formate + 2 phosphate + 3 H(+). The protein operates within cofactor biosynthesis; riboflavin biosynthesis; 5-amino-6-(D-ribitylamino)uracil from GTP: step 1/4. Functionally, catalyzes the conversion of GTP to 2,5-diamino-6-ribosylamino-4(3H)-pyrimidinone 5'-phosphate (DARP), formate and pyrophosphate. In Acinetobacter baumannii (strain SDF), this protein is GTP cyclohydrolase-2.